The chain runs to 402 residues: S-adenosylmethionine synthase (402 aa).

H16 serves as a coordination point for ATP. Residue D18 coordinates Mg(2+). A K(+)-binding site is contributed by E44. E57 and Q109 together coordinate L-methionine. A flexible loop region spans residues 109–119 (QSAHIAQGVDA). Residues 174–176 (DTK), D252, 258–259 (RK), A275, and K279 contribute to the ATP site. D252 is an L-methionine binding site. An L-methionine-binding site is contributed by K283.

Belongs to the AdoMet synthase family. In terms of assembly, homotetramer; dimer of dimers. The cofactor is Mg(2+). K(+) serves as cofactor.

It is found in the cytoplasm. It carries out the reaction L-methionine + ATP + H2O = S-adenosyl-L-methionine + phosphate + diphosphate. Its pathway is amino-acid biosynthesis; S-adenosyl-L-methionine biosynthesis; S-adenosyl-L-methionine from L-methionine: step 1/1. In terms of biological role, catalyzes the formation of S-adenosylmethionine (AdoMet) from methionine and ATP. The overall synthetic reaction is composed of two sequential steps, AdoMet formation and the subsequent tripolyphosphate hydrolysis which occurs prior to release of AdoMet from the enzyme. In Rhizorhabdus wittichii (strain DSM 6014 / CCUG 31198 / JCM 15750 / NBRC 105917 / EY 4224 / RW1) (Sphingomonas wittichii), this protein is S-adenosylmethionine synthase.